The primary structure comprises 532 residues: Calnexin homolog 2 (532 aa).

The first 25 residues, 1–25 (MRERIITFVSLLLVALLSFPSVSYC), serve as a signal peptide directing secretion. At 26-468 (DDQTILYESF…EKAETQPNLT (443 aa)) the chain is on the lumenal side. 2 residues coordinate Ca(2+): serine 34 and aspartate 65. A disulfide bridge links cysteine 110 with cysteine 145. An alpha-D-glucoside is bound by residues tyrosine 114, lysine 116, tyrosine 136, and aspartate 143. The tract at residues 208–302 (NLLSAEDFEP…DEEDGEWEAP (95 aa)) is disordered. The segment at 225–358 (IPDPEDKKPE…RDIPNPDYFE (134 aa)) is p domain (Extended arm). Basic and acidic residues predominate over residues 226–242 (PDPEDKKPEDWDERAKI). 5 repeat units span residues 227–238 (DPEDKKPEDWDE), 244–255 (DPNAVKPDDWDE), 263–274 (DEEAEKPEGWLD), 282–293 (DPEASKPEDWDD), and 297–307 (GEWEAPKVSNT). 4 X approximate repeats stretches follow at residues 227-293 (DPED…DWDD) and 297-354 (GEWE…IPNP). Composition is skewed to acidic residues over residues 252-283 (DWDEDAPMEIEDEEAEKPEGWLDDEPVEVEDP) and 290-299 (DWDDEEDGEW). Cysteine 309 and cysteine 315 are joined by a disulfide. Tandem repeats lie at residues 316-326 (GEWKRPMKRNP), 330-340 (GKWSSPLIDNP), and 344-354 (GIWKPRDIPNP). Position 373 (glutamate 373) interacts with an alpha-D-glucoside. Aspartate 384 serves as a coordination point for Ca(2+). N-linked (GlcNAc...) asparagine glycosylation occurs at asparagine 466. Residues 469–489 (IGVLISIVIVFLSLFFKLIFG) traverse the membrane as a helical segment. The Cytoplasmic segment spans residues 490–532 (GAKAKVEKKKPETAAETSTSEAKTEEKAEAVAAPRKRQTRRES). A disordered region spans residues 493–532 (AKVEKKKPETAAETSTSEAKTEEKAEAVAAPRKRQTRRES). The span at 523-532 (PRKRQTRRES) shows a compositional bias: basic residues.

It belongs to the calreticulin family.

The protein resides in the endoplasmic reticulum membrane. Calcium-binding protein that interacts with newly synthesized monoglucosylated glycoproteins in the endoplasmic reticulum. It may act in assisting protein assembly and/or in the retention within the ER of unassembled protein subunits. It seems to play a major role in the quality control apparatus of the ER by the retention of incorrectly folded proteins. In Arabidopsis thaliana (Mouse-ear cress), this protein is Calnexin homolog 2.